The following is a 703-amino-acid chain: Prolyl 3-hydroxylase 2 (703 aa).

The first 21 residues, 1 to 21 (MRESTWVSLLLLLLLPTPQRG), serve as a signal peptide directing secretion. The interval 17–40 (TPQRGGPQDGRRSPEPEPERGPLQ) is disordered. Positions 25–36 (DGRRSPEPEPER) are enriched in basic and acidic residues. TPR repeat units lie at residues 42-75 (FDLL…HRRL), 144-177 (RVPY…NPEH), 205-238 (HLES…YFNE), and 301-334 (PLHY…HPDN). 2 N-linked (GlcNAc...) asparagine glycosylation sites follow: Asn444 and Asn544. The region spanning 552–666 (THMVCRTALS…RCAVALWFTL (115 aa)) is the Fe2OG dioxygenase domain. Residues His575, Asp577, and His647 each contribute to the Fe cation site. Arg657 is a catalytic residue. Positions 700–703 (KDEL) match the Prevents secretion from ER motif.

Belongs to the leprecan family. It depends on Fe cation as a cofactor. The cofactor is L-ascorbate. In terms of tissue distribution, detected in kidney. Detected on kidney tubular cells, pancreas acinar cells, Schwann cells of the peripheral nerve in the pinna, and in tunica adventitia, the smooth muscle layer of the aortic wall (at protein level). Detected in lung, skeletal muscle and kidney. Detected in kidney glomeruli and in prehypertrophic regions of long bone from neonates. In the eye, detected in the epithelial layer of the cornea and at lower levels in the sclera at the posterior end of the eye.

The protein localises to the endoplasmic reticulum. It localises to the sarcoplasmic reticulum. It is found in the golgi apparatus. The catalysed reaction is L-prolyl-[collagen] + 2-oxoglutarate + O2 = trans-3-hydroxy-L-prolyl-[collagen] + succinate + CO2. Functionally, prolyl 3-hydroxylase that catalyzes the post-translational formation of 3-hydroxyproline on collagens. Contributes to proline 3-hydroxylation of collagen COL4A1 and COL1A1 in tendons, the eye sclera and in the eye lens capsule. Has high activity with the type IV collagen COL4A1, and lower activity with COL1A1. Catalyzes hydroxylation of the first Pro in Gly-Pro-Hyp sequences where Hyp is 4-hydroxyproline. Has no activity on substrates that have proline instead of 4-hydroxyproline in the third position. The protein is Prolyl 3-hydroxylase 2 of Mus musculus (Mouse).